A 1227-amino-acid chain; its full sequence is RNA-binding protein 20 (1227 aa).

2 disordered regions span residues 1 to 58 and 289 to 374; these read MVLA…QAGL and GSHV…SKQG. Over residues 27–42 the composition is skewed to low complexity; it reads PGARASPAPSGPRGMQ. The span at 43-56 shows a compositional bias: pro residues; the sequence is QPPPPPQPPPPPQA. Over residues 313-331 the composition is skewed to polar residues; that stretch reads QGTNSQWESPHGFSGQSKP. The U1-type zinc finger occupies 409 to 443; the sequence is HLPHICSICDKKVFDLKDWELHVKGKLHAQKCLVF. Serine 498 carries the post-translational modification Phosphoserine. The RRM domain occupies 518–593; that stretch reads RVVHICNLPE…EKLLIRMSKR (76 aa). The segment covering 624 to 634 has biased composition (basic and acidic residues); sequence EADRYGPERPR. 2 disordered regions span residues 624–906 and 977–1089; these read EADR…TNME and SLKS…ASPP. Positions 628–655 are RS; sequence YGPERPRSRSPVSRSLSPRSHTPSFTSC. Residues serine 635, serine 637, serine 640, serine 642, serine 660, and serine 679 each carry the phosphoserine modification. Over residues 636-660 the composition is skewed to low complexity; it reads RSPVSRSLSPRSHTPSFTSCSSSHS. 2 stretches are compositionally biased toward basic and acidic residues: residues 674-709 and 716-738; these read DSWE…PWAH and RQLD…EKYP. The segment covering 741–752 has biased composition (polar residues); the sequence is GSPNLPHSVSSY. Residue serine 742 is modified to Phosphoserine. 3 stretches are compositionally biased toward basic and acidic residues: residues 753-772, 784-807, and 816-856; these read KSRE…DKYL, RKDE…EDGL, and EGAK…KEEQ. A Phosphoserine modification is found at serine 801. 7 positions are modified to phosphoserine: serine 865, serine 876, serine 891, serine 893, serine 977, serine 980, and serine 1013. Residues 868-888 are compositionally biased toward basic and acidic residues; it reads RQEKEAEFSDPENTRTKKEQD. The segment covering 1024 to 1036 has biased composition (basic and acidic residues); the sequence is CYEKEAKGVESSD. 5 positions are modified to phosphoserine: serine 1048, serine 1060, serine 1080, serine 1115, and serine 1120. Residues 1161–1192 form a Matrin-type zinc finger; that stretch reads FYCKLCGLFYTSEETAKMSHCRSAVHYRNLQK. Positions 1201–1215 are enriched in basic and acidic residues; that stretch reads GLKETEGADSPRPED. The tract at residues 1201–1227 is disordered; it reads GLKETEGADSPRPEDSGIVPRFERKKL. Serine 1210 bears the Phosphoserine mark.

As to quaternary structure, associates with components of the U1 and U2 U1 small nuclear ribonucleoprotein complexes. Phosphorylation regulates the subcellular localization. Phosphorylation of Ser-635 and Ser-637 in the RS (arginine/serine-rich) region promotes nuclear localization of the protein. In contrast, phosphorylation of the C-terminal disordered region promotes localization to cytoplasmic ribonucleoprotein granules. Mainly expressed in the heart. Also expressed in skeletal muscle tissues, ovary, small intestine and colon.

It is found in the nucleus. Its subcellular location is the cytoplasm. The protein localises to the cytoplasmic ribonucleoprotein granule. In terms of biological role, RNA-binding protein that acts as a regulator of mRNA splicing of a subset of genes encoding key structural proteins involved in cardiac development, such as TTN (Titin), CACNA1C, CAMK2D or PDLIM5/ENH. Acts as a repressor of mRNA splicing: specifically binds the 5'UCUU-3' motif that is predominantly found within intronic sequences of pre-mRNAs, leading to the exclusion of specific exons in target transcripts. RBM20-mediated exon skipping is hormone-dependent and is essential for TTN isoform transition in both cardiac and skeletal muscles. RBM20-mediated exon skipping of TTN provides substrates for the formation of circular RNA (circRNAs) from the TTN transcripts. Together with RBM24, promotes the expression of short isoforms of PDLIM5/ENH in cardiomyocytes. The polypeptide is RNA-binding protein 20 (Homo sapiens (Human)).